The following is a 281-amino-acid chain: ATP synthase gamma chain (281 aa).

It belongs to the ATPase gamma chain family. F-type ATPases have 2 components, CF(1) - the catalytic core - and CF(0) - the membrane proton channel. CF(1) has five subunits: alpha(3), beta(3), gamma(1), delta(1), epsilon(1). CF(0) has three main subunits: a, b and c.

The protein resides in the cell inner membrane. In terms of biological role, produces ATP from ADP in the presence of a proton gradient across the membrane. The gamma chain is believed to be important in regulating ATPase activity and the flow of protons through the CF(0) complex. The chain is ATP synthase gamma chain from Ehrlichia chaffeensis (strain ATCC CRL-10679 / Arkansas).